The chain runs to 192 residues: NAD(P)H-quinone oxidoreductase subunit J, organellar chromatophore (192 aa).

The protein belongs to the complex I 30 kDa subunit family. As to quaternary structure, NDH is composed of at least 16 different subunits, 5 of which are encoded in the nucleus.

The protein localises to the plastid. It localises to the organellar chromatophore thylakoid membrane. It catalyses the reaction a quinone + NADH + H(+) = a quinol + NAD(+). Its function is as follows. NDH-1 shuttles electrons from NADH, via FMN and iron-sulfur (Fe-S) centers, to quinones in the respiratory chain. Couples the redox reaction to proton translocation (for every two electrons transferred, four hydrogen ions are translocated across the cytoplasmic membrane), and thus conserves the redox energy in a proton gradient. The protein is NAD(P)H-quinone oxidoreductase subunit J, organellar chromatophore of Paulinella chromatophora.